The following is a 238-amino-acid chain: Ribonuclease 3 (238 aa).

The RNase III domain maps to 8–135; that stretch reads VAELERRIGY…LIAALYIDGG (128 aa). E48 lines the Mg(2+) pocket. Residue D52 is part of the active site. Residues D121 and E124 each contribute to the Mg(2+) site. The active site involves E124. The region spanning 161–230 is the DRBM domain; the sequence is DPKTQLQEWV…AQCMLLKREG (70 aa).

This sequence belongs to the ribonuclease III family. In terms of assembly, homodimer. The cofactor is Mg(2+).

It localises to the cytoplasm. The catalysed reaction is Endonucleolytic cleavage to 5'-phosphomonoester.. Its function is as follows. Digests double-stranded RNA. Involved in the processing of primary rRNA transcript to yield the immediate precursors to the large and small rRNAs (23S and 16S). Processes some mRNAs, and tRNAs when they are encoded in the rRNA operon. Processes pre-crRNA and tracrRNA of type II CRISPR loci if present in the organism. This chain is Ribonuclease 3, found in Phenylobacterium zucineum (strain HLK1).